Here is a 634-residue protein sequence, read N- to C-terminus: Replication protein E1 (634 aa).

Positions 85 to 87 match the Nuclear localization signal motif; the sequence is KRK. Phosphoserine; by host is present on residues Ser91 and Ser95. The tract at residues 92-117 is disordered; sequence PRSSPLGDITNQNNTHSHSQANESQV. The span at 100 to 115 shows a compositional bias: polar residues; that stretch reads ITNQNNTHSHSQANES. Residues 172-338 form a DNA-binding region region; the sequence is CANVELNSIC…QTQLQHSFED (167 aa). The region spanning 437–587 is the SF3 helicase domain; that stretch reads VNFMSFIQMF…FPFDNNGNAV (151 aa). Residue 463–470 participates in ATP binding; sequence GPPNTGKS.

This sequence belongs to the papillomaviridae E1 protein family. As to quaternary structure, can form hexamers. Interacts with E2 protein; this interaction increases E1 DNA binding specificity. Interacts with host DNA polymerase subunit POLA2. Interacts with host single stranded DNA-binding protein RPA1. Interacts with host TOP1; this interaction stimulates the enzymatic activity of TOP1. Phosphorylated.

It is found in the host nucleus. The enzyme catalyses Couples ATP hydrolysis with the unwinding of duplex DNA by translocating in the 3'-5' direction.. It catalyses the reaction ATP + H2O = ADP + phosphate + H(+). Functionally, ATP-dependent DNA 3'-5' helicase required for initiation of viral DNA replication. It forms a complex with the viral E2 protein. The E1-E2 complex binds to the replication origin which contains binding sites for both proteins. During the initial step, a dimer of E1 interacts with a dimer of protein E2 leading to a complex that binds the viral origin of replication with high specificity. Then, a second dimer of E1 displaces the E2 dimer in an ATP-dependent manner to form the E1 tetramer. Following this, two E1 monomers are added to each half of the site, which results in the formation of two E1 trimers on the viral ori. Subsequently, two hexamers will be created. The double hexamer acts as a bi-directional helicase machinery and unwinds the viral DNA and then recruits the host DNA polymerase to start replication. The polypeptide is Replication protein E1 (Homo sapiens (Human)).